The chain runs to 143 residues: Submaxillary gland androgen-regulated protein 2, isoform delta (143 aa).

An N-terminal signal peptide occupies residues 1 to 22 (MKPLCLVFGLCVLIGCFLSSEC). Disordered regions lie at residues 28 to 52 (GQHDPTRPLSPSNPSSHFYPQPDPN) and 116 to 143 (VPRKKSNATPAANNFITTATAPNSTDSF). Polar residues-rich tracts occupy residues 36-45 (LSPSNPSSHF) and 122-143 (NATPAANNFITTATAPNSTDSF).

The protein resides in the secreted. Functionally, may play a role in protection or detoxification. This Mus musculus (Mouse) protein is Submaxillary gland androgen-regulated protein 2, isoform delta (Smr2).